A 911-amino-acid chain; its full sequence is Protein translocase subunit SecA (911 aa).

Residues glutamine 87, 105–109 (GEGKT), and aspartate 512 contribute to the ATP site. The interval 861–893 (APGLESEQLSEEGAEVAVASAPVRNDQKLGRNE) is disordered. The Zn(2+) site is built by cysteine 895, cysteine 897, cysteine 906, and histidine 907.

Belongs to the SecA family. In terms of assembly, monomer and homodimer. Part of the essential Sec protein translocation apparatus which comprises SecA, SecYEG and auxiliary proteins SecDF-YajC and YidC. The cofactor is Zn(2+).

It localises to the cell inner membrane. The protein localises to the cytoplasm. It catalyses the reaction ATP + H2O + cellular proteinSide 1 = ADP + phosphate + cellular proteinSide 2.. Part of the Sec protein translocase complex. Interacts with the SecYEG preprotein conducting channel. Has a central role in coupling the hydrolysis of ATP to the transfer of proteins into and across the cell membrane, serving both as a receptor for the preprotein-SecB complex and as an ATP-driven molecular motor driving the stepwise translocation of polypeptide chains across the membrane. The polypeptide is Protein translocase subunit SecA (Pseudomonas putida (strain ATCC 700007 / DSM 6899 / JCM 31910 / BCRC 17059 / LMG 24140 / F1)).